Here is a 164-residue protein sequence, read N- to C-terminus: Phosphopantetheine adenylyltransferase (164 aa).

Thr10 serves as a coordination point for substrate. Residues 10 to 11 (TF) and His18 contribute to the ATP site. Positions 42, 79, and 93 each coordinate substrate. Residues 94–96 (GLR), Glu104, and 129–135 (NQIISSR) contribute to the ATP site.

Belongs to the bacterial CoaD family. As to quaternary structure, homohexamer. Requires Mg(2+) as cofactor.

It is found in the cytoplasm. The catalysed reaction is (R)-4'-phosphopantetheine + ATP + H(+) = 3'-dephospho-CoA + diphosphate. Its pathway is cofactor biosynthesis; coenzyme A biosynthesis; CoA from (R)-pantothenate: step 4/5. Functionally, reversibly transfers an adenylyl group from ATP to 4'-phosphopantetheine, yielding dephospho-CoA (dPCoA) and pyrophosphate. The protein is Phosphopantetheine adenylyltransferase of Pelagibacter ubique (strain HTCC1062).